The sequence spans 1088 residues: Calcium-transporting ATPase 5, plasma membrane-type (1088 aa).

Positions 1-11 are enriched in low complexity; it reads MESASSSLATS. Residues 1-32 form a disordered region; that stretch reads MESASSSLATSGRRRSSSGGGGGSWGSIGSAA. The Cytoplasmic portion of the chain corresponds to 1–198; it reads MESASSSLAT…FLWDACKDLT (198 aa). Residues 199–219 form a helical membrane-spanning segment; the sequence is LIILMVAAAVSLALGITTEGI. Residues 220–221 lie on the Extracellular side of the membrane; the sequence is KE. The chain crosses the membrane as a helical span at residues 222–242; that stretch reads GWYDGASIAFAVLLVVVVTAT. Over 243–338 the chain is Cytoplasmic; the sequence is SDYKQSLQFQ…MSGCKVADGY (96 aa). Residues 339-359 traverse the membrane as a helical segment; the sequence is GTMLVTAVGINTEWGLLMASI. At 360–375 the chain is on the extracellular side; it reads SEDSGEETPLQVRLNG. A helical membrane pass occupies residues 376–396; that stretch reads VATFIGMVGLSVALAVLVVLL. Topologically, residues 397 to 425 are cytoplasmic; that stretch reads ARYFTGHTYNPDGSVQYVKGKMGVGQTIR. Residues 426-446 traverse the membrane as a helical segment; that stretch reads GIVGIFTVAVTIVVVAVPEGL. The Extracellular portion of the chain corresponds to 447–851; it reads PLAVTLTLAF…GRSVYANIQK (405 aa). The active-site 4-aspartylphosphate intermediate is D486. 3 N-linked (GlcNAc...) asparagine glycosylation sites follow: N532, N569, and N737. Mg(2+)-binding residues include D794 and D798. A helical membrane pass occupies residues 852 to 872; it reads FIQFQLTVNVAALIINVVAAV. Residues 873 to 880 are Cytoplasmic-facing; the sequence is SSGNVPLN. A helical transmembrane segment spans residues 881-901; it reads AVQLLWVNLIMDTLGALALAT. Over 902-919 the chain is Extracellular; the sequence is EPPTDHLMQRPPVGRREP. Residues 920 to 940 traverse the membrane as a helical segment; sequence LITNVMWRNLIIMALFQVIVL. At 941–1000 the chain is on the cytoplasmic side; sequence LTLNFRGTSLLQLKNDNQAHADKVKNTFIFNTFVLCQVFNEFNARKPDELNIFKGITGNH. A helical membrane pass occupies residues 1001-1021; that stretch reads LFMAIVAITVVLQALIVEFLG. At 1022–1030 the chain is on the extracellular side; it reads KFTSTTRLT. A helical transmembrane segment spans residues 1031-1051; sequence WQLWLVSIGLAFFSWPLAFVG. Over 1052-1088 the chain is Cytoplasmic; that stretch reads KLIPVPERPLGDFFACCCPGSKQAADAKGDDADHSDV.

The protein belongs to the cation transport ATPase (P-type) (TC 3.A.3) family. Type IIB subfamily. As to quaternary structure, interacts with NOH1.

It localises to the cell membrane. The enzyme catalyses Ca(2+)(in) + ATP + H2O = Ca(2+)(out) + ADP + phosphate + H(+). With respect to regulation, activated by calmodulin. Its function is as follows. This magnesium-dependent enzyme catalyzes the hydrolysis of ATP coupled with the translocation of calcium from the cytosol out of the cell, into the endoplasmic reticulum, or into organelles. Involved in salt and drought stress tolerance. Involved in cold stress tolerance. The polypeptide is Calcium-transporting ATPase 5, plasma membrane-type (Oryza sativa subsp. japonica (Rice)).